Reading from the N-terminus, the 133-residue chain is Fluoride-specific ion channel FluC (133 aa).

4 helical membrane-spanning segments follow: residues 12 to 32, 41 to 61, 76 to 96, and 104 to 124; these read LAMT…ASLI, WGTL…LVWL, IVGV…CLVF, and MIGI…FAGA. Gly-81 and Thr-84 together coordinate Na(+).

Belongs to the fluoride channel Fluc/FEX (TC 1.A.43) family.

It localises to the cell inner membrane. It carries out the reaction fluoride(in) = fluoride(out). Its activity is regulated as follows. Na(+) is not transported, but it plays an essential structural role and its presence is essential for fluoride channel function. Its function is as follows. Fluoride-specific ion channel. Important for reducing fluoride concentration in the cell, thus reducing its toxicity. This Xanthomonas axonopodis pv. citri (strain 306) protein is Fluoride-specific ion channel FluC.